The following is a 707-amino-acid chain: Signal transducer and activator of transcription A (707 aa).

A compositionally biased stretch (polar residues) spans 70 to 89; that stretch reads LNQSDQFNLGRSNNLTPRTN. The interval 70-246 is disordered; sequence LNQSDQFNLG…GNPNLSSPQP (177 aa). The span at 90 to 111 shows a compositional bias: low complexity; it reads QLQQLQQQQQQQQQPQQQQQQQ. Polar residues predominate over residues 112 to 121; the sequence is TYGTQSPIHM. Residues 142–238 are compositionally biased toward low complexity; that stretch reads QQSYNNNNSN…QQQQQQQQGN (97 aa). Residues 242 to 356 adopt a coiled-coil conformation; the sequence is SSPQPILDTI…IQSILNPQHS (115 aa). Residues 443-487 mediate DNA binding; that stretch reads KFLAGTRKCSVNLKFGVNIRDLDNVTTTVESDASNPFVVITNECQ. Residues 583–686 form the SH2 domain; sequence WQEGIIYGYM…FLKLHKDTAL (104 aa). Y702 is modified (phosphotyrosine).

Belongs to the transcription factor STAT family. As to quaternary structure, monomer, in the absence of tyrosine phosphorylation. Homodimer, or heterodimer with another family member, when tyrosine phosphorylated. Tyrosine phosphorylated in response to cAMP. Not tyrosine phosphorylated in growing cells. Tyrosine phosphorylation is first detected at the tight mound stage, continues throughout the slug stage and early culmination, and starts to decrease at mid-culmination. Barely detectable in fruiting bodies.

The protein resides in the cytoplasm. Its subcellular location is the nucleus. Functionally, transcription factor that binds to 5'-TTGAATTGA-3' elements in the promoter region of target genes. Functions as a repressor of the ecmB gene. Regulates the differentiation of prestalk cells during development. The sequence is that of Signal transducer and activator of transcription A (dstA) from Dictyostelium discoideum (Social amoeba).